The following is a 331-amino-acid chain: Ketol-acid reductoisomerase (NADP(+)) (331 aa).

Residues 2 to 182 (ARMYYDADAQ…GGTRAGILET (181 aa)) enclose the KARI N-terminal Rossmann domain. Residues 25-28 (YGSQ), Ser51, Ser53, and 83-86 (DEVQ) each bind NADP(+). His108 is an active-site residue. Gly134 serves as a coordination point for NADP(+). The 146-residue stretch at 183–328 (TFREETETDL…QELRSMFSWL (146 aa)) folds into the KARI C-terminal knotted domain. Residues Asp191, Glu195, Glu227, and Glu231 each coordinate Mg(2+). Ser252 contacts substrate.

It belongs to the ketol-acid reductoisomerase family. Mg(2+) serves as cofactor.

It carries out the reaction (2R)-2,3-dihydroxy-3-methylbutanoate + NADP(+) = (2S)-2-acetolactate + NADPH + H(+). The catalysed reaction is (2R,3R)-2,3-dihydroxy-3-methylpentanoate + NADP(+) = (S)-2-ethyl-2-hydroxy-3-oxobutanoate + NADPH + H(+). It functions in the pathway amino-acid biosynthesis; L-isoleucine biosynthesis; L-isoleucine from 2-oxobutanoate: step 2/4. Its pathway is amino-acid biosynthesis; L-valine biosynthesis; L-valine from pyruvate: step 2/4. Involved in the biosynthesis of branched-chain amino acids (BCAA). Catalyzes an alkyl-migration followed by a ketol-acid reduction of (S)-2-acetolactate (S2AL) to yield (R)-2,3-dihydroxy-isovalerate. In the isomerase reaction, S2AL is rearranged via a Mg-dependent methyl migration to produce 3-hydroxy-3-methyl-2-ketobutyrate (HMKB). In the reductase reaction, this 2-ketoacid undergoes a metal-dependent reduction by NADPH to yield (R)-2,3-dihydroxy-isovalerate. This Thermosynechococcus vestitus (strain NIES-2133 / IAM M-273 / BP-1) protein is Ketol-acid reductoisomerase (NADP(+)).